A 645-amino-acid chain; its full sequence is Dictomallein-like protein (645 aa).

Positions 1 to 13 are cleaved as a signal peptide; the sequence is MKLSMVMVLLVLA. A disordered region spans residues 19–55; sequence CGGNDDNNSERTHESGDSNGDVTTPDNDASSNDEDDA. The Peptidase M66 domain maps to 177-448; the sequence is PALHPELDLT…QRWVRNRARM (272 aa). H333 provides a ligand contact to Zn(2+). The active site involves E334. Zn(2+) is bound by residues H337 and H343.

Belongs to the dictomallein family. Requires Zn(2+) as cofactor.

The protein localises to the secreted. The chain is Dictomallein-like protein (dtmL) from Hahella chejuensis (strain KCTC 2396).